A 502-amino-acid polypeptide reads, in one-letter code: AMP phosphorylase (502 aa).

Residues G168, 195–200 (SRAITS), and T204 each bind AMP. The active-site Proton donor is D257. Residues S265 and K289 each contribute to the AMP site.

It belongs to the thymidine/pyrimidine-nucleoside phosphorylase family. Type 2 subfamily.

It carries out the reaction AMP + phosphate = alpha-D-ribose 1,5-bisphosphate + adenine. The catalysed reaction is CMP + phosphate = cytosine + alpha-D-ribose 1,5-bisphosphate. It catalyses the reaction UMP + phosphate = alpha-D-ribose 1,5-bisphosphate + uracil. Its function is as follows. Catalyzes the conversion of AMP and phosphate to adenine and ribose 1,5-bisphosphate (R15P). Exhibits phosphorylase activity toward CMP and UMP in addition to AMP. Functions in an archaeal AMP degradation pathway, together with R15P isomerase and RubisCO. The protein is AMP phosphorylase of Hyperthermus butylicus (strain DSM 5456 / JCM 9403 / PLM1-5).